A 395-amino-acid chain; its full sequence is ADP-ribosylation factor-like protein 13A (395 aa).

GTP is bound by residues 28 to 35 (GLDNSGKS), 71 to 75 (DLTGD), and 130 to 133 (NKQD).

The protein belongs to the small GTPase superfamily. Arf family.

This chain is ADP-ribosylation factor-like protein 13A (Arl13a), found in Rattus norvegicus (Rat).